A 353-amino-acid chain; its full sequence is UPF0283 membrane protein YcjF (353 aa).

Helical transmembrane passes span 70–90, 100–120, and 213–233; these read MVMG…VQWT, VALG…GSVV, and ESTL…FIAW.

The protein belongs to the UPF0283 family.

The protein localises to the cell inner membrane. This is UPF0283 membrane protein YcjF from Escherichia coli O139:H28 (strain E24377A / ETEC).